The sequence spans 202 residues: Coiled-coil domain-containing protein 69 (202 aa).

Residues 1 to 11 (MGCRQSRHSRG) show a composition bias toward basic residues. 2 disordered regions span residues 1-20 (MGCR…VEET) and 32-52 (GRIL…SNAQ). Glycine 2 carries the N-myristoyl glycine lipid modification. Residues 32–42 (GRILEGRHEEA) show a composition bias toward basic and acidic residues. Residue serine 92 is modified to Phosphoserine. The stretch at 112-146 (WEQELESLHHVIEMKNERIHELEKQLFLLEMLKEK) forms a coiled coil.

It belongs to the CCDC69 family.

The protein localises to the cytoplasm. It is found in the cytoskeleton. It localises to the spindle. Its subcellular location is the midbody. May act as a scaffold to regulate the recruitment and assembly of spindle midzone components. Required for the localization of AURKB and PLK1 to the spindle midzone. The polypeptide is Coiled-coil domain-containing protein 69 (Ccdc69) (Mus musculus (Mouse)).